The following is a 286-amino-acid chain: CDP-diacylglycerol--serine O-phosphatidyltransferase (286 aa).

Transmembrane regions (helical) follow at residues 15 to 35, 74 to 94, 95 to 115, 135 to 155, 167 to 187, and 207 to 227; these read ILPSAMTVLSICAGLTAIKFA, IDSLADAVNFGVTPALVLYVS, MLSKWPVGWVVVLLYAVCVVL, EFFVGMPAPAGAVSMIGLLAL, GWFLSFWVTGTSILLVSGIPM, and LAICAAAAVLAPYLLIWVIII.

It belongs to the CDP-alcohol phosphatidyltransferase class-I family.

Its subcellular location is the cell membrane. It carries out the reaction a CDP-1,2-diacyl-sn-glycerol + L-serine = a 1,2-diacyl-sn-glycero-3-phospho-L-serine + CMP + H(+). This Mycobacterium tuberculosis (strain ATCC 25618 / H37Rv) protein is CDP-diacylglycerol--serine O-phosphatidyltransferase (pssA).